A 452-amino-acid polypeptide reads, in one-letter code: Bifunctional protein GlmU (452 aa).

A pyrophosphorylase region spans residues 1-226 (MAFSVVVLAA…AVEVEGVNNR (226 aa)). UDP-N-acetyl-alpha-D-glucosamine contacts are provided by residues 8-11 (LAAG), Lys-22, Gln-73, and 78-79 (GT). Asp-102 is a binding site for Mg(2+). UDP-N-acetyl-alpha-D-glucosamine-binding residues include Gly-137, Glu-151, Asn-166, and Asn-224. Asn-224 contributes to the Mg(2+) binding site. Residues 227–247 (LQLANLERALQNRQADELMTN) form a linker region. Positions 248-452 (GVTLLDPSRF…IPNWPRPTKK (205 aa)) are N-acetyltransferase. UDP-N-acetyl-alpha-D-glucosamine-binding residues include Arg-330 and Lys-348. Catalysis depends on His-360, which acts as the Proton acceptor. Residues Tyr-363 and Asn-374 each contribute to the UDP-N-acetyl-alpha-D-glucosamine site. Residues Ala-377, 383–384 (NY), Ser-402, Ala-420, and Arg-437 contribute to the acetyl-CoA site.

It in the N-terminal section; belongs to the N-acetylglucosamine-1-phosphate uridyltransferase family. This sequence in the C-terminal section; belongs to the transferase hexapeptide repeat family. Homotrimer. The cofactor is Mg(2+).

It localises to the cytoplasm. It catalyses the reaction alpha-D-glucosamine 1-phosphate + acetyl-CoA = N-acetyl-alpha-D-glucosamine 1-phosphate + CoA + H(+). It carries out the reaction N-acetyl-alpha-D-glucosamine 1-phosphate + UTP + H(+) = UDP-N-acetyl-alpha-D-glucosamine + diphosphate. Its pathway is nucleotide-sugar biosynthesis; UDP-N-acetyl-alpha-D-glucosamine biosynthesis; N-acetyl-alpha-D-glucosamine 1-phosphate from alpha-D-glucosamine 6-phosphate (route II): step 2/2. It functions in the pathway nucleotide-sugar biosynthesis; UDP-N-acetyl-alpha-D-glucosamine biosynthesis; UDP-N-acetyl-alpha-D-glucosamine from N-acetyl-alpha-D-glucosamine 1-phosphate: step 1/1. The protein operates within bacterial outer membrane biogenesis; LPS lipid A biosynthesis. Its function is as follows. Catalyzes the last two sequential reactions in the de novo biosynthetic pathway for UDP-N-acetylglucosamine (UDP-GlcNAc). The C-terminal domain catalyzes the transfer of acetyl group from acetyl coenzyme A to glucosamine-1-phosphate (GlcN-1-P) to produce N-acetylglucosamine-1-phosphate (GlcNAc-1-P), which is converted into UDP-GlcNAc by the transfer of uridine 5-monophosphate (from uridine 5-triphosphate), a reaction catalyzed by the N-terminal domain. The chain is Bifunctional protein GlmU from Alteromonas mediterranea (strain DSM 17117 / CIP 110805 / LMG 28347 / Deep ecotype).